A 299-amino-acid chain; its full sequence is Oxygen-dependent coproporphyrinogen-III oxidase (299 aa).

Serine 92 serves as a coordination point for substrate. Mn(2+)-binding residues include histidine 96 and histidine 106. Histidine 106 (proton donor) is an active-site residue. 108 to 110 (NVR) serves as a coordination point for substrate. Residues histidine 145 and histidine 175 each coordinate Mn(2+). Residues 240-275 (YVEFNLVWDRGTLFGLQTGGRTESILMSMPPLVRWE) are important for dimerization. 258 to 260 (GGR) provides a ligand contact to substrate.

Belongs to the aerobic coproporphyrinogen-III oxidase family. Homodimer. Requires Mn(2+) as cofactor.

It is found in the cytoplasm. It catalyses the reaction coproporphyrinogen III + O2 + 2 H(+) = protoporphyrinogen IX + 2 CO2 + 2 H2O. Its pathway is porphyrin-containing compound metabolism; protoporphyrin-IX biosynthesis; protoporphyrinogen-IX from coproporphyrinogen-III (O2 route): step 1/1. Its function is as follows. Involved in the heme biosynthesis. Catalyzes the aerobic oxidative decarboxylation of propionate groups of rings A and B of coproporphyrinogen-III to yield the vinyl groups in protoporphyrinogen-IX. The polypeptide is Oxygen-dependent coproporphyrinogen-III oxidase (Escherichia coli O17:K52:H18 (strain UMN026 / ExPEC)).